A 429-amino-acid chain; its full sequence is Protein AST1 (429 aa).

As to quaternary structure, interacts with PMA1.

Its subcellular location is the cell membrane. It localises to the membrane raft. The protein localises to the golgi apparatus membrane. It is found in the late endosome membrane. Its function is as follows. Lipid raft-associated protein involved in the targeting of PMA1 from Golgi to the plasma membrane. May induce clustering of PMA1, which facilitates partition of PMA1 into lipid rafts after leaving the ER and its transport to the cell surface. The protein is Protein AST1 of Saccharomyces cerevisiae (strain ATCC 204508 / S288c) (Baker's yeast).